A 517-amino-acid chain; its full sequence is NADH-quinone oxidoreductase subunit N (517 aa).

Transmembrane regions (helical) follow at residues 14–34 (LAPT…EAFV), 40–60 (HMVQ…MVVV), 77–97 (GPAL…LLLI), 131–151 (ATEV…FVAA), 154–174 (LLTM…LCAL), 189–209 (YFLL…LVYG), 238–258 (VLLF…AAAA), 272–292 (PTPI…GALL), 306–326 (FTPI…VLAV), 334–354 (LLAY…LAPS), 362–382 (MFYL…VTLV), 404–424 (FYAG…LTSG), 451–471 (SMVL…SEPG), and 481–501 (GWLT…LGVV).

The protein belongs to the complex I subunit 2 family. As to quaternary structure, NDH-1 is composed of 14 different subunits. Subunits NuoA, H, J, K, L, M, N constitute the membrane sector of the complex.

It localises to the cell membrane. It catalyses the reaction a quinone + NADH + 5 H(+)(in) = a quinol + NAD(+) + 4 H(+)(out). Functionally, NDH-1 shuttles electrons from NADH, via FMN and iron-sulfur (Fe-S) centers, to quinones in the respiratory chain. The immediate electron acceptor for the enzyme in this species is believed to be a menaquinone. Couples the redox reaction to proton translocation (for every two electrons transferred, four hydrogen ions are translocated across the cytoplasmic membrane), and thus conserves the redox energy in a proton gradient. In Salinispora arenicola (strain CNS-205), this protein is NADH-quinone oxidoreductase subunit N.